Reading from the N-terminus, the 1183-residue chain is DNA-directed RNA polymerase subunit beta (1183 aa).

Belongs to the RNA polymerase beta chain family. As to quaternary structure, the RNAP catalytic core consists of 2 alpha, 1 beta, 1 beta' and 1 omega subunit. When a sigma factor is associated with the core the holoenzyme is formed, which can initiate transcription.

The enzyme catalyses RNA(n) + a ribonucleoside 5'-triphosphate = RNA(n+1) + diphosphate. Functionally, DNA-dependent RNA polymerase catalyzes the transcription of DNA into RNA using the four ribonucleoside triphosphates as substrates. This Staphylococcus aureus (strain MRSA252) protein is DNA-directed RNA polymerase subunit beta.